We begin with the raw amino-acid sequence, 314 residues long: Formimidoylglutamase (314 aa).

Residues histidine 127, aspartate 153, histidine 155, aspartate 157, aspartate 245, and aspartate 247 each coordinate Mn(2+).

It belongs to the arginase family. Mn(2+) serves as cofactor.

It catalyses the reaction N-formimidoyl-L-glutamate + H2O = formamide + L-glutamate. Its pathway is amino-acid degradation; L-histidine degradation into L-glutamate; L-glutamate from N-formimidoyl-L-glutamate (hydrolase route): step 1/1. Catalyzes the conversion of N-formimidoyl-L-glutamate to L-glutamate and formamide. This chain is Formimidoylglutamase, found in Aeromonas hydrophila subsp. hydrophila (strain ATCC 7966 / DSM 30187 / BCRC 13018 / CCUG 14551 / JCM 1027 / KCTC 2358 / NCIMB 9240 / NCTC 8049).